A 355-amino-acid chain; its full sequence is MKLEVNLKQNPYDIIIEKGALKGVGQWVKSLWEPQKIALITDNHVGGLYAEKVKLSLEHEGFEVVVFNFLEGEASKNLKTVNKAYEFLIKNGMTRSDGIVALGGGVVGDLAGFVASTYMRGIHFVQVPTSLTAQVDSSIGGKTGVNTPSAKNIVGTFAQPDGVLIDPNVLETLGKRELIEGMGEVVKYGLIDDPELWQLLDNIDGSVHSILENSETIIYRSCNVKRKIVVEDEFEGGVRMYLNFGHTIGHAVEQTAGYGKVMHGEAVAIGMVQISRVAEKKNLMPQGITRQIAEMCVKFGLPVDYEPWRVEELYTALTHDKKARGNSIKTVIVPEIGKAAINQIPLVEMKEYLEK.

NAD(+)-binding positions include 71–76 (EGEASK), 105–109 (GVVGD), 129–130 (TS), K142, and K151. Residues E184, H246, and H263 each contribute to the Zn(2+) site.

The protein belongs to the sugar phosphate cyclases superfamily. Dehydroquinate synthase family. Requires Co(2+) as cofactor. It depends on Zn(2+) as a cofactor. NAD(+) serves as cofactor.

It is found in the cytoplasm. It carries out the reaction 7-phospho-2-dehydro-3-deoxy-D-arabino-heptonate = 3-dehydroquinate + phosphate. It functions in the pathway metabolic intermediate biosynthesis; chorismate biosynthesis; chorismate from D-erythrose 4-phosphate and phosphoenolpyruvate: step 2/7. Its function is as follows. Catalyzes the conversion of 3-deoxy-D-arabino-heptulosonate 7-phosphate (DAHP) to dehydroquinate (DHQ). In Streptococcus thermophilus (strain ATCC BAA-491 / LMD-9), this protein is 3-dehydroquinate synthase.